Reading from the N-terminus, the 247-residue chain is Phycocyanobilin:ferredoxin oxidoreductase (247 aa).

The protein belongs to the HY2 family.

The catalysed reaction is (2R,3Z)-phycocyanobilin + 4 oxidized [2Fe-2S]-[ferredoxin] = biliverdin IXalpha + 4 reduced [2Fe-2S]-[ferredoxin] + 4 H(+). In terms of biological role, catalyzes the four-electron reduction of biliverdin IX-alpha (2-electron reduction at both the A and D rings); the reaction proceeds via an isolatable 2-electron intermediate, 181,182-dihydrobiliverdin. The sequence is that of Phycocyanobilin:ferredoxin oxidoreductase from Synechococcus sp. (strain CC9605).